The sequence spans 105 residues: UPF0145 protein CCNA_02462 (105 aa).

The protein belongs to the UPF0145 family.

The chain is UPF0145 protein CCNA_02462 from Caulobacter vibrioides (strain NA1000 / CB15N) (Caulobacter crescentus).